The primary structure comprises 335 residues: S-adenosylmethionine decarboxylase proenzyme (335 aa).

Catalysis depends on residues glutamate 12 and glutamate 15. The active-site Schiff-base intermediate with substrate; via pyruvic acid is the serine 70. Serine 70 is subject to Pyruvic acid (Ser); by autocatalysis. The Proton donor; for catalytic activity role is filled by cysteine 84. Residues serine 231 and histidine 245 each act as proton acceptor; for processing activity in the active site.

This sequence belongs to the eukaryotic AdoMetDC family. Pyruvate serves as cofactor. Post-translationally, is synthesized initially as an inactive proenzyme. Formation of the active enzyme involves a self-maturation process in which the active site pyruvoyl group is generated from an internal serine residue via an autocatalytic post-translational modification. Two non-identical subunits are generated from the proenzyme in this reaction, and the pyruvate is formed at the N-terminus of the alpha chain, which is derived from the carboxyl end of the proenzyme. The post-translation cleavage follows an unusual pathway, termed non-hydrolytic serinolysis, in which the side chain hydroxyl group of the serine supplies its oxygen atom to form the C-terminus of the beta chain, while the remainder of the serine residue undergoes an oxidative deamination to produce ammonia and the pyruvoyl group blocking the N-terminus of the alpha chain.

The enzyme catalyses S-adenosyl-L-methionine + H(+) = S-adenosyl 3-(methylsulfanyl)propylamine + CO2. It participates in amine and polyamine biosynthesis; S-adenosylmethioninamine biosynthesis; S-adenosylmethioninamine from S-adenosyl-L-methionine: step 1/1. Functionally, essential for biosynthesis of the polyamines spermidine and spermine. Promotes maintenance and self-renewal of embryonic stem cells, by maintaining spermine levels. The protein is S-adenosylmethionine decarboxylase proenzyme (amd1) of Xenopus laevis (African clawed frog).